The following is a 198-amino-acid chain: Protein GrpE (198 aa).

Residues 1 to 27 (MEERNEQVVEETKEAQTEEATIEKNSE) show a composition bias toward basic and acidic residues. The interval 1-39 (MEERNEQVVEETKEAQTEEATIEKNSEESVTEEATEETV) is disordered. Positions 29–39 (SVTEEATEETV) are enriched in acidic residues.

This sequence belongs to the GrpE family. As to quaternary structure, homodimer.

Its subcellular location is the cytoplasm. In terms of biological role, participates actively in the response to hyperosmotic and heat shock by preventing the aggregation of stress-denatured proteins, in association with DnaK and GrpE. It is the nucleotide exchange factor for DnaK and may function as a thermosensor. Unfolded proteins bind initially to DnaJ; upon interaction with the DnaJ-bound protein, DnaK hydrolyzes its bound ATP, resulting in the formation of a stable complex. GrpE releases ADP from DnaK; ATP binding to DnaK triggers the release of the substrate protein, thus completing the reaction cycle. Several rounds of ATP-dependent interactions between DnaJ, DnaK and GrpE are required for fully efficient folding. In Bacillus cytotoxicus (strain DSM 22905 / CIP 110041 / 391-98 / NVH 391-98), this protein is Protein GrpE.